A 192-amino-acid polypeptide reads, in one-letter code: Pyridoxal 5'-phosphate synthase subunit PdxT (192 aa).

50–52 (GES) is a binding site for L-glutamine. Cys82 (nucleophile) is an active-site residue. Residues Arg109 and 136-137 (IR) contribute to the L-glutamine site. Residues His172 and Glu174 each act as charge relay system in the active site.

This sequence belongs to the glutaminase PdxT/SNO family. In the presence of PdxS, forms a dodecamer of heterodimers. Only shows activity in the heterodimer.

It carries out the reaction aldehydo-D-ribose 5-phosphate + D-glyceraldehyde 3-phosphate + L-glutamine = pyridoxal 5'-phosphate + L-glutamate + phosphate + 3 H2O + H(+). The enzyme catalyses L-glutamine + H2O = L-glutamate + NH4(+). Its pathway is cofactor biosynthesis; pyridoxal 5'-phosphate biosynthesis. Functionally, catalyzes the hydrolysis of glutamine to glutamate and ammonia as part of the biosynthesis of pyridoxal 5'-phosphate. The resulting ammonia molecule is channeled to the active site of PdxS. This is Pyridoxal 5'-phosphate synthase subunit PdxT from Haemophilus influenzae (strain PittEE).